A 160-amino-acid polypeptide reads, in one-letter code: Major pollen allergen Cor a 1 isoforms 5, 6, 11 and 16 (160 aa).

It belongs to the BetVI family.

The chain is Major pollen allergen Cor a 1 isoforms 5, 6, 11 and 16 from Corylus avellana (European hazel).